Here is a 117-residue protein sequence, read N- to C-terminus: Large ribosomal subunit protein bL19 (117 aa).

The protein belongs to the bacterial ribosomal protein bL19 family.

In terms of biological role, this protein is located at the 30S-50S ribosomal subunit interface and may play a role in the structure and function of the aminoacyl-tRNA binding site. This is Large ribosomal subunit protein bL19 from Aliivibrio salmonicida (strain LFI1238) (Vibrio salmonicida (strain LFI1238)).